A 215-amino-acid chain; its full sequence is Adenylate kinase (215 aa).

10-15 (GAGKGT) is a binding site for ATP. Residues 30 to 59 (STGDMFRAAMKNETEMGKLAKSFIDKGELV) form an NMP region. AMP is bound by residues T31, R36, 57-59 (ELV), 86-89 (GYPR), and Q93. Residues 127-165 (GRYICRNCGATYHKIFNPTKVEGVCDVCGSHDLYQRADD) form an LID region. R128 serves as a coordination point for ATP. Residues C131 and C134 each contribute to the Zn(2+) site. Residue 137–138 (TY) coordinates ATP. 2 residues coordinate Zn(2+): C151 and C154. AMP contacts are provided by R162 and R173. Q201 lines the ATP pocket.

It belongs to the adenylate kinase family. In terms of assembly, monomer.

The protein resides in the cytoplasm. The catalysed reaction is AMP + ATP = 2 ADP. The protein operates within purine metabolism; AMP biosynthesis via salvage pathway; AMP from ADP: step 1/1. Its function is as follows. Catalyzes the reversible transfer of the terminal phosphate group between ATP and AMP. Plays an important role in cellular energy homeostasis and in adenine nucleotide metabolism. The chain is Adenylate kinase from Lactococcus lactis subsp. lactis (strain IL1403) (Streptococcus lactis).